Here is a 116-residue protein sequence, read N- to C-terminus: Iron-sulfur cluster insertion protein ErpA (116 aa).

3 residues coordinate iron-sulfur cluster: Cys44, Cys108, and Cys110.

It belongs to the HesB/IscA family. Homodimer. It depends on iron-sulfur cluster as a cofactor.

Its function is as follows. Required for insertion of 4Fe-4S clusters for at least IspG. The chain is Iron-sulfur cluster insertion protein ErpA from Idiomarina loihiensis (strain ATCC BAA-735 / DSM 15497 / L2-TR).